The chain runs to 704 residues: Elongation factor G 2 (704 aa).

The region spanning 8–290 (ERYRNIGISA…AIIDYLPSPV (283 aa)) is the tr-type G domain. GTP contacts are provided by residues 17 to 24 (AHIDAGKT), 88 to 92 (DTPGH), and 142 to 145 (NKMD).

The protein belongs to the TRAFAC class translation factor GTPase superfamily. Classic translation factor GTPase family. EF-G/EF-2 subfamily.

The protein resides in the cytoplasm. Functionally, catalyzes the GTP-dependent ribosomal translocation step during translation elongation. During this step, the ribosome changes from the pre-translocational (PRE) to the post-translocational (POST) state as the newly formed A-site-bound peptidyl-tRNA and P-site-bound deacylated tRNA move to the P and E sites, respectively. Catalyzes the coordinated movement of the two tRNA molecules, the mRNA and conformational changes in the ribosome. The chain is Elongation factor G 2 from Polaromonas sp. (strain JS666 / ATCC BAA-500).